We begin with the raw amino-acid sequence, 447 residues long: N-succinylarginine dihydrolase (447 aa).

Residues 19-28, Asn-110, and 137-138 contribute to the substrate site; these read AGLSFGNEAS and HR. The active site involves Glu-174. Position 212 (Arg-212) interacts with substrate. His-248 is a catalytic residue. 2 residues coordinate substrate: Asp-250 and Asn-359. Cys-365 serves as the catalytic Nucleophile.

Belongs to the succinylarginine dihydrolase family. As to quaternary structure, homodimer.

It carries out the reaction N(2)-succinyl-L-arginine + 2 H2O + 2 H(+) = N(2)-succinyl-L-ornithine + 2 NH4(+) + CO2. It functions in the pathway amino-acid degradation; L-arginine degradation via AST pathway; L-glutamate and succinate from L-arginine: step 2/5. Its function is as follows. Catalyzes the hydrolysis of N(2)-succinylarginine into N(2)-succinylornithine, ammonia and CO(2). This chain is N-succinylarginine dihydrolase, found in Escherichia coli O6:K15:H31 (strain 536 / UPEC).